We begin with the raw amino-acid sequence, 501 residues long: Actin-binding protein WASF3 (501 aa).

A coiled-coil region spans residues Asn-57–Gln-93. At Tyr-151 the chain carries Phosphotyrosine; by ABL1. The stretch at Lys-162–Asn-206 forms a coiled coil. Positions Glu-170–Leu-443 are disordered. A compositionally biased stretch (basic and acidic residues) spans Gln-182 to Val-192. Over residues Arg-219–Asp-237 the composition is skewed to polar residues. Tyr-248 bears the Phosphotyrosine; by ABL1 mark. Residues His-256–Tyr-267 are compositionally biased toward polar residues. Over residues Gln-302–Ala-312 the composition is skewed to pro residues. Tyr-337 carries the phosphotyrosine; by ABL1 modification. Composition is skewed to pro residues over residues Ser-341–Ile-352 and Ala-394–Pro-410. Low complexity predominate over residues Ser-411–Pro-422. The WH2 domain maps to Ala-439–Val-456. At Tyr-485 the chain carries Phosphotyrosine; by ABL1.

It belongs to the SCAR/WAVE family. Binds actin and the Arp2/3 complex. Phosphorylation by ABL1 promotes lamellipodia formation and cell migration.

Its subcellular location is the cytoplasm. The protein localises to the cytoskeleton. Downstream effector molecules involved in the transmission of signals from tyrosine kinase receptors and small GTPases to the actin cytoskeleton. Plays a role in the regulation of cell morphology and cytoskeletal organization. Required in the control of cell shape. The chain is Actin-binding protein WASF3 (Wasf3) from Mus musculus (Mouse).